The sequence spans 576 residues: Zn(2)-C6 fungal-type transcription factor mpsE (576 aa).

The segment at residues 15-46 (CDRCRSHKLKCPQQPSTATGACQRCTRAKAQC) is a DNA-binding region (zn(2)-C6 fungal-type). A compositionally biased stretch (polar residues) spans 47–61 (TFSPRSRAIKNTQDG). Disordered regions lie at residues 47–123 (TFSP…GTFD), 334–369 (VAHA…SSTA), and 404–424 (HPAP…LHRR). Residues 95-109 (PPQQQQSDQQKPSGS) show a composition bias toward low complexity.

Its subcellular location is the nucleus. In terms of biological role, transcription factor; part of the gene cluster that mediates the biosynthesis of macrophasetins, 3-decalinoyltetramic acids (DTAs) which feature a tetramate (pyrrolidine-2,4-dione) unit connected to a decalin fragment and that have potent bioactivities. The chain is Zn(2)-C6 fungal-type transcription factor mpsE from Macrophomina phaseolina (strain MS6) (Charcoal rot fungus).